A 1215-amino-acid chain; its full sequence is DNA-directed RNA polymerase subunit beta' (1215 aa).

Zn(2+)-binding residues include Cys60, Cys62, Cys75, and Cys78. Positions 450, 452, and 454 each coordinate Mg(2+). The Zn(2+) site is built by Cys818, Cys892, Cys899, and Cys902.

Belongs to the RNA polymerase beta' chain family. In terms of assembly, the RNAP catalytic core consists of 2 alpha, 1 beta, 1 beta' and 1 omega subunit. When a sigma factor is associated with the core the holoenzyme is formed, which can initiate transcription. The cofactor is Mg(2+). Zn(2+) serves as cofactor.

The catalysed reaction is RNA(n) + a ribonucleoside 5'-triphosphate = RNA(n+1) + diphosphate. DNA-dependent RNA polymerase catalyzes the transcription of DNA into RNA using the four ribonucleoside triphosphates as substrates. The protein is DNA-directed RNA polymerase subunit beta' of Streptococcus sanguinis (strain SK36).